The following is a 139-amino-acid chain: Protein archease (139 aa).

Asp-12, Asp-138, and Ile-139 together coordinate Ca(2+).

This sequence belongs to the archease family.

In terms of biological role, activates the tRNA-splicing ligase complex by facilitating the enzymatic turnover of catalytic subunit RtcB. Acts by promoting the guanylylation of RtcB, a key intermediate step in tRNA ligation. Can also alter the NTP specificity of RtcB such that ATP, dGTP or ITP is used efficiently. The chain is Protein archease from Saccharolobus solfataricus (strain ATCC 35092 / DSM 1617 / JCM 11322 / P2) (Sulfolobus solfataricus).